A 188-amino-acid chain; its full sequence is GTP cyclohydrolase 1 (188 aa).

Zn(2+) contacts are provided by Cys75, His78, and Cys146.

Belongs to the GTP cyclohydrolase I family. In terms of assembly, toroid-shaped homodecamer, composed of two pentamers of five dimers.

The enzyme catalyses GTP + H2O = 7,8-dihydroneopterin 3'-triphosphate + formate + H(+). Its pathway is cofactor biosynthesis; 7,8-dihydroneopterin triphosphate biosynthesis; 7,8-dihydroneopterin triphosphate from GTP: step 1/1. In Hahella chejuensis (strain KCTC 2396), this protein is GTP cyclohydrolase 1.